Here is a 484-residue protein sequence, read N- to C-terminus: MTLRLHDSRTQSLRDFVPLVDGRVGIYVCGPTVQSAPHIGHLRSALAYDQLRRWLAYRGLDVTLVRNVTDIDDKVIDNARRGQEAGGTEEWWALAYRVELEFSRAYAALGILPPSYEPRATASIGEMQAIIGRLVERGHAYPADDGSGDVYFDTASWPEYGELTRQRAADMEAAADADPRAKRDVRDFALWKGAKPGEPASASWPSPWGAGRPGWHIECSAMSTRYLGAEFDIHGGGLDLRFPHHENELAQSRAAGDPFARYWLHNGLVAVAGQKMSKSLGNSLFAADLLASARPVVVRYFLGSAHYRSTLEFHDGALAEAEAALDRIETFLDRSARRLAGTRFQAEPAATDGAPAAVPDEFAEAMDDDLSVPQALAVLHDAVRAGNAALDAGDLQEAASLRADVSAMVAVLGIDPLADEWRTASDQPARRALQALVEHRIAERQTAREARDFALADRIRQELAEAGITIEDSPGGSHWSIDGE.

Cys-29 provides a ligand contact to Zn(2+). The 'HIGH' region signature appears at 31 to 41; that stretch reads PTVQSAPHIGH. The Zn(2+) site is built by Cys-219, His-244, and Glu-248. Residues 275–279 carry the 'KMSKS' region motif; sequence KMSKS. An ATP-binding site is contributed by Lys-278.

It belongs to the class-I aminoacyl-tRNA synthetase family. As to quaternary structure, monomer. The cofactor is Zn(2+).

Its subcellular location is the cytoplasm. It carries out the reaction tRNA(Cys) + L-cysteine + ATP = L-cysteinyl-tRNA(Cys) + AMP + diphosphate. This Clavibacter sepedonicus (Clavibacter michiganensis subsp. sepedonicus) protein is Cysteine--tRNA ligase.